A 296-amino-acid polypeptide reads, in one-letter code: Aspartate carbamoyltransferase catalytic subunit (296 aa).

Positions 50 and 51 each coordinate carbamoyl phosphate. Residue lysine 79 participates in L-aspartate binding. Carbamoyl phosphate contacts are provided by arginine 100, histidine 128, and glutamine 131. The L-aspartate site is built by arginine 161 and arginine 219. 2 residues coordinate carbamoyl phosphate: leucine 258 and proline 259.

It belongs to the aspartate/ornithine carbamoyltransferase superfamily. ATCase family. As to quaternary structure, heterooligomer of catalytic and regulatory chains.

It carries out the reaction carbamoyl phosphate + L-aspartate = N-carbamoyl-L-aspartate + phosphate + H(+). Its pathway is pyrimidine metabolism; UMP biosynthesis via de novo pathway; (S)-dihydroorotate from bicarbonate: step 2/3. Catalyzes the condensation of carbamoyl phosphate and aspartate to form carbamoyl aspartate and inorganic phosphate, the committed step in the de novo pyrimidine nucleotide biosynthesis pathway. The chain is Aspartate carbamoyltransferase catalytic subunit from Korarchaeum cryptofilum (strain OPF8).